The following is a 358-amino-acid chain: Putative ZDHHC-type palmitoyltransferase 4 (358 aa).

4 helical membrane passes run 28–48 (FVGFATSLITLIAITYFTIIF), 57–77 (LFFIFNFFCDLSISLFLTYGI), 171–191 (YFFLFLSYLWVSVCYVLAHSL), and 210–230 (LLVIISSIGSFITFVAVGSFG). One can recognise a DHHC domain in the interval 127–177 (SYCKKCSKAKPPRCHHCSVCDKCVLKMDHHCPWIGGCVGFYNYRYFFLFLS). N-linked (GlcNAc...) asparagine glycans are attached at residues asparagine 255 and asparagine 296. The interval 302-358 (NNKNNENNENNENNEIDNHNNNNNNNNNNNNNEKEDNINENDNLISYDTDEYNRHKK) is disordered. Over residues 305 to 332 (NNENNENNENNEIDNHNNNNNNNNNNNN) the composition is skewed to low complexity.

Belongs to the DHHC palmitoyltransferase family.

It is found in the membrane. It catalyses the reaction L-cysteinyl-[protein] + hexadecanoyl-CoA = S-hexadecanoyl-L-cysteinyl-[protein] + CoA. The protein is Putative ZDHHC-type palmitoyltransferase 4 of Dictyostelium discoideum (Social amoeba).